We begin with the raw amino-acid sequence, 723 residues long: Fatty acid oxidation complex subunit alpha (723 aa).

Residues 1–189 are enoyl-CoA hydratase/isomerase; the sequence is MIYQAETLQV…KIGLLDAVVD (189 aa). Asp-296 provides a ligand contact to substrate. Residues 311 to 723 form a 3-hydroxyacyl-CoA dehydrogenase region; the sequence is SKDTQRAAVL…FYGAQQQGSI (413 aa). NAD(+) contacts are provided by residues Met-325, Asp-344, 401–403, Lys-408, and Ser-430; that span reads VVE. His-451 acts as the For 3-hydroxyacyl-CoA dehydrogenase activity in catalysis. Asn-454 lines the NAD(+) pocket. Residues Asn-501 and Tyr-661 each contribute to the substrate site.

It in the N-terminal section; belongs to the enoyl-CoA hydratase/isomerase family. In the C-terminal section; belongs to the 3-hydroxyacyl-CoA dehydrogenase family. In terms of assembly, heterotetramer of two alpha chains (FadB) and two beta chains (FadA).

The enzyme catalyses a (3S)-3-hydroxyacyl-CoA + NAD(+) = a 3-oxoacyl-CoA + NADH + H(+). It catalyses the reaction a (3S)-3-hydroxyacyl-CoA = a (2E)-enoyl-CoA + H2O. The catalysed reaction is a 4-saturated-(3S)-3-hydroxyacyl-CoA = a (3E)-enoyl-CoA + H2O. It carries out the reaction (3S)-3-hydroxybutanoyl-CoA = (3R)-3-hydroxybutanoyl-CoA. The enzyme catalyses a (3Z)-enoyl-CoA = a 4-saturated (2E)-enoyl-CoA. It catalyses the reaction a (3E)-enoyl-CoA = a 4-saturated (2E)-enoyl-CoA. It participates in lipid metabolism; fatty acid beta-oxidation. Involved in the aerobic and anaerobic degradation of long-chain fatty acids via beta-oxidation cycle. Catalyzes the formation of 3-oxoacyl-CoA from enoyl-CoA via L-3-hydroxyacyl-CoA. It can also use D-3-hydroxyacyl-CoA and cis-3-enoyl-CoA as substrate. The protein is Fatty acid oxidation complex subunit alpha of Vibrio campbellii (strain ATCC BAA-1116).